Consider the following 130-residue polypeptide: Histone H2A.1 (130 aa).

The disordered stretch occupies residues 1–22; sequence MSGGKGKAGSSEKASTSRSAKA. The residue at position 2 (S2) is an N-acetylserine. N6-acetyllysine occurs at positions 5 and 7. Position 105 is an N5-methylglutamine (Q105). S127 is modified (phosphoserine). A [ST]-Q motif motif is present at residues 127–128; that stretch reads SQ.

This sequence belongs to the histone H2A family. As to quaternary structure, the nucleosome is a histone octamer containing two molecules each of H2A, H2B, H3 and H4 assembled in one H3-H4 heterotetramer and two H2A-H2B heterodimers. The octamer wraps approximately 147 bp of DNA. Phosphorylated to form H2AS128ph (gamma-H2A) in response to DNA double-strand breaks (DSBs) generated by exogenous genotoxic agents and by stalled replication forks. Phosphorylation is dependent on the DNA damage checkpoint kinases MEC1/ATR and TEL1/ATM, spreads on either side of a detected DSB site and may mark the surrounding chromatin for recruitment of proteins required for DNA damage signaling and repair. Gamma-H2A is removed from the DNA prior to the strand invasion-primer extension step of the repair process and subsequently dephosphorylated. Dephosphorylation is necessary for efficient recovery from the DNA damage checkpoint. In terms of processing, acetylated by ESA1 to form H2AK4ac and H2AK7ac.

It is found in the nucleus. It localises to the chromosome. Core component of nucleosome which plays a central role in DNA double strand break (DSB) repair. Nucleosomes wrap and compact DNA into chromatin, limiting DNA accessibility to the cellular machineries which require DNA as a template. Histones thereby play a central role in transcription regulation, DNA repair, DNA replication and chromosomal stability. DNA accessibility is regulated via a complex set of post-translational modifications of histones, also called histone code, and nucleosome remodeling. The chain is Histone H2A.1 (HTA1) from Lodderomyces elongisporus (strain ATCC 11503 / CBS 2605 / JCM 1781 / NBRC 1676 / NRRL YB-4239) (Yeast).